Reading from the N-terminus, the 611-residue chain is TANK-binding kinase 1-binding protein 1 (611 aa).

The tract at residues 1 to 280 (MESMFEDDIS…QDLASNQSEC (280 aa)) is homodimerization. Residues 48-162 (YGDIKERLGG…ALVETHLRQI (115 aa)) adopt a coiled-coil conformation. At serine 184 the chain carries Phosphoserine. Residues 218-277 (TSVSVSELERRRLEEALEAAQGEARGAQLREEQLQAECERLQGELKQLQETRAQDLASNQ) adopt a coiled-coil conformation. Residues 281-330 (DMAWVKRVGDDQVNLALAYTELTEELGRLRELSSLQGRILRTLLQEQARN) form an interaction with TBK1 and IKBKE region. The disordered stretch occupies residues 328–437 (ARNAGQRHSP…PPPPPGERTL (110 aa)). Residues 346 to 361 (PACPSPSPPARPPPCA) show a composition bias toward pro residues. A compositionally biased stretch (low complexity) spans 362-372 (PCQSPAAQRRS). A phosphoserine mark is found at serine 365, serine 372, serine 379, serine 385, serine 400, and serine 415. The segment covering 389 to 406 (PSCPSPVPQRRSPVPPSC) has biased composition (pro residues). Pro residues predominate over residues 416 to 433 (PVPPSCPAPQPRPPPPPG). Phosphoserine occurs at positions 500 and 530. The UBZ1-type zinc-finger motif lies at 579 to 605 (IRSCPLCQLGFPVGYPDDALIKHIDSH). 4 residues coordinate Zn(2+): cysteine 582, cysteine 585, histidine 601, and histidine 605.

Homodimer. May form a heterodimer with NAP1. Interacts with TKB1 and IKBKE. Weakly interacts with DDX3X.

Adapter protein which constitutively binds TBK1 and IKBKE playing a role in antiviral innate immunity. Essential for the efficient induction of IRF-dependent transcription following infection with Sendai virus. The chain is TANK-binding kinase 1-binding protein 1 from Mus musculus (Mouse).